A 335-amino-acid polypeptide reads, in one-letter code: Phosphatidylinositol:ceramide inositolphosphotransferase (335 aa).

Topologically, residues 1–21 (MVLMGPHSALRLLPLKTQAIR) are cytoplasmic. Residues 22 to 42 (FVLLLLLSVLILAVALLVTNA) form a helical membrane-spanning segment. At 43–72 (RMPDPKVVRPLPDIGFEVFPKVGWLEHLTD) the chain is on the extracellular side. A helical transmembrane segment spans residues 73–93 (VCIFILNFLSLLVVFKLYLLH). Residues 94–98 (RQNEG) are Cytoplasmic-facing. A helical membrane pass occupies residues 99-119 (LDELQPFSCCPLIGKIIFGVW). The Extracellular portion of the chain corresponds to 120 to 139 (DSGRQSGIEKRDAHLIAWIR). The chain crosses the membrane as a helical span at residues 140–160 (YFTTYFIVLLFRAIVVVMTSY). Residues 161–179 (PATDNHCQNPMKITNPVKN) are Cytoplasmic-facing. A helical membrane pass occupies residues 180 to 200 (VIMTLVTFGSGSIHCGDLMFS). The Extracellular portion of the chain corresponds to 201 to 203 (GHT). Histidine 202 is a catalytic residue. The chain crosses the membrane as a helical span at residues 204–224 (VSITLSLLVQWIYGSMLHWVF). Topologically, residues 225–335 (RPASVLLVLL…GPACGNFGHW (111 aa)) are cytoplasmic. Active-site residues include histidine 245 and aspartate 249.

Belongs to the sphingomyelin synthase family.

Its subcellular location is the membrane. In terms of biological role, bidirectional lipid inositolphosphotransferase capable of converting phosphatidylinositol (PI) and ceramide to inositol-phosphorylceramide (IPC) and diacylglycerol (DAG) and vice versa. Direction is dependent on the relative concentrations of DAG and ceramide as phosphoinositol acceptors. Essential for viability of the pathogenic bloodstream stage of this human protozoan parasite and, consequently, can be considered as potential drug target. This Trypanosoma cruzi (strain CL Brener) protein is Phosphatidylinositol:ceramide inositolphosphotransferase.